The chain runs to 86 residues: Small ribosomal subunit protein bS20 (86 aa).

The protein belongs to the bacterial ribosomal protein bS20 family.

Its function is as follows. Binds directly to 16S ribosomal RNA. This Arthrobacter sp. (strain FB24) protein is Small ribosomal subunit protein bS20.